A 404-amino-acid chain; its full sequence is Mevalonate kinase (404 aa).

Residues K12, S130, and 135–141 each bind ATP; that span reads GAGLGSS. Residues S141 and E184 each coordinate Mg(2+). The Proton acceptor role is filled by D195.

The protein belongs to the GHMP kinase family. Mevalonate kinase subfamily. As to quaternary structure, homodimer. The cofactor is Mg(2+).

The protein localises to the cytoplasm. It localises to the nucleus. The enzyme catalyses (R)-mevalonate + ATP = (R)-5-phosphomevalonate + ADP + H(+). It functions in the pathway isoprenoid biosynthesis; isopentenyl diphosphate biosynthesis via mevalonate pathway; isopentenyl diphosphate from (R)-mevalonate: step 1/3. Its activity is regulated as follows. Farnesyl pyrophosphate and geranyl pyrophosphate inhibit mevalonate kinase by binding competitively at the ATP-binding site. Functionally, mevalonate kinase; part of the second module of ergosterol biosynthesis pathway that includes the middle steps of the pathway. Erg12 converts mevalonate into 5-phosphomevalonate. The second module is carried out in the vacuole and involves the formation of farnesyl diphosphate, which is also an important intermediate in the biosynthesis of ubiquinone, dolichol, heme and prenylated proteins. Activity by the mevalonate kinase erg12 first converts mevalonate into 5-phosphomevalonate. 5-phosphomevalonate is then further converted to 5-diphosphomevalonate by the phosphomevalonate kinase erg8. The diphosphomevalonate decarboxylase mvd1 then produces isopentenyl diphosphate. The isopentenyl-diphosphate delta-isomerase idi1 then catalyzes the 1,3-allylic rearrangement of the homoallylic substrate isopentenyl (IPP) to its highly electrophilic allylic isomer, dimethylallyl diphosphate (DMAPP). Finally the farnesyl diphosphate synthase fps1 catalyzes the sequential condensation of isopentenyl pyrophosphate with dimethylallyl pyrophosphate, and then with the resultant geranylpyrophosphate to the ultimate product farnesyl pyrophosphate. In Schizosaccharomyces pombe (strain 972 / ATCC 24843) (Fission yeast), this protein is Mevalonate kinase (erg12).